The primary structure comprises 438 residues: Adenylosuccinate synthetase (438 aa).

GTP-binding positions include 13-19 and 41-43; these read GDEGKGK and GHT. D14 acts as the Proton acceptor in catalysis. Mg(2+) contacts are provided by D14 and G41. IMP is bound by residues 14-17, 39-42, T130, R144, Q225, T240, and R310; these read DEGK and NAGH. Residue H42 is the Proton donor of the active site. 306–312 lines the substrate pocket; sequence ATTGRLR. GTP-binding positions include R312, 338-340, and 421-423; these read KLD and STG.

This sequence belongs to the adenylosuccinate synthetase family. In terms of assembly, homodimer. It depends on Mg(2+) as a cofactor.

Its subcellular location is the cytoplasm. It carries out the reaction IMP + L-aspartate + GTP = N(6)-(1,2-dicarboxyethyl)-AMP + GDP + phosphate + 2 H(+). It functions in the pathway purine metabolism; AMP biosynthesis via de novo pathway; AMP from IMP: step 1/2. Plays an important role in the de novo pathway of purine nucleotide biosynthesis. Catalyzes the first committed step in the biosynthesis of AMP from IMP. The protein is Adenylosuccinate synthetase of Aliivibrio fischeri (strain ATCC 700601 / ES114) (Vibrio fischeri).